The primary structure comprises 467 residues: Glutamate--tRNA ligase (467 aa).

The short motif at 9–19 is the 'HIGH' region element; sequence PSPTGYLHIGG. A 'KMSKS' region motif is present at residues 237–241; that stretch reads KLSKR. Lysine 240 is a binding site for ATP.

Belongs to the class-I aminoacyl-tRNA synthetase family. Glutamate--tRNA ligase type 1 subfamily. In terms of assembly, monomer.

The protein resides in the cytoplasm. It catalyses the reaction tRNA(Glu) + L-glutamate + ATP = L-glutamyl-tRNA(Glu) + AMP + diphosphate. In terms of biological role, catalyzes the attachment of glutamate to tRNA(Glu) in a two-step reaction: glutamate is first activated by ATP to form Glu-AMP and then transferred to the acceptor end of tRNA(Glu). In Xylella fastidiosa (strain 9a5c), this protein is Glutamate--tRNA ligase.